The sequence spans 348 residues: Dihydroorotase (348 aa).

Positions 14 and 16 each coordinate Zn(2+). Residues 16 to 18 (HLR) and Asn42 each bind substrate. Zn(2+) is bound by residues Lys100, His137, and His175. The residue at position 100 (Lys100) is an N6-carboxylysine. His137 contacts substrate. Leu220 contributes to the substrate binding site. Asp248 is a Zn(2+) binding site. The active site involves Asp248. His252 and Ala264 together coordinate substrate.

The protein belongs to the metallo-dependent hydrolases superfamily. DHOase family. Class II DHOase subfamily. Homodimer. It depends on Zn(2+) as a cofactor.

It catalyses the reaction (S)-dihydroorotate + H2O = N-carbamoyl-L-aspartate + H(+). It functions in the pathway pyrimidine metabolism; UMP biosynthesis via de novo pathway; (S)-dihydroorotate from bicarbonate: step 3/3. Its function is as follows. Catalyzes the reversible cyclization of carbamoyl aspartate to dihydroorotate. The chain is Dihydroorotase from Pseudomonas aeruginosa (strain ATCC 15692 / DSM 22644 / CIP 104116 / JCM 14847 / LMG 12228 / 1C / PRS 101 / PAO1).